The sequence spans 150 residues: FAD synthase (150 aa).

ATP contacts are provided by residues 16 to 17, 21 to 24, and aspartate 102; these read VF and HVGH.

This sequence belongs to the archaeal FAD synthase family. Homodimer. Requires a divalent metal cation as cofactor.

It catalyses the reaction FMN + ATP + H(+) = FAD + diphosphate. It participates in cofactor biosynthesis; FAD biosynthesis; FAD from FMN: step 1/1. Its function is as follows. Catalyzes the transfer of the AMP portion of ATP to flavin mononucleotide (FMN) to produce flavin adenine dinucleotide (FAD) coenzyme. The polypeptide is FAD synthase (Thermococcus onnurineus (strain NA1)).